The primary structure comprises 879 residues: Prostaglandin F2 receptor negative regulator (879 aa).

Residues 1-21 form the signal peptide; it reads MGRPAPRPLLLALLSLAVCRG. Ig-like C2-type domains lie at 22-137 and 149-263; these read RVVR…DTVQ and PSSR…QEIQ. Topologically, residues 22-832 are extracellular; sequence RVVRVPAGTL…MDVLNAFKYP (811 aa). 2 disulfide bridges follow: cysteine 43–cysteine 119 and cysteine 169–cysteine 247. Asparagine 44 carries an N-linked (GlcNAc...) asparagine glycan. The short motif at 89-91 is the Cell attachment site element; that stretch reads RGD. Threonine 271 carries the phosphothreonine modification. 4 Ig-like C2-type domains span residues 276–389, 406–536, 544–662, and 688–813; these read PTAL…WHKV, PEYQ…DVFS, ASED…AWSP, and PTFN…AEIH. Cysteines 299 and 373 form a disulfide. 3 N-linked (GlcNAc...) asparagine glycosylation sites follow: asparagine 300, asparagine 383, and asparagine 413. Residues 424 to 427 carry the Endoplasmic reticulum retention signal motif; sequence PTEL. A disulfide bond links cysteine 429 and cysteine 515. Asparagine 525, asparagine 600, asparagine 618, and asparagine 691 each carry an N-linked (GlcNAc...) asparagine glycan. Cysteine 571 and cysteine 655 are joined by a disulfide. The Cell attachment site signature appears at 703 to 705; that stretch reads RGD. Cysteine 711 and cysteine 793 are joined by a disulfide. The helical transmembrane segment at 833-853 threads the bilayer; that stretch reads LLIGVGLSTVIGLLSCLIGYC. Residues 854 to 879 lie on the Cytoplasmic side of the membrane; it reads SSHWCCKKEVRETRRERRRLMSMEMD.

Interacts with CD9 and CD81. Part of a complex composed of CD9, CD81 and IGSF8. Also seems to interact with CD63, CD82 and CD151. As to expression, expressed in myoblasts (at protein level).

It localises to the endoplasmic reticulum membrane. The protein resides in the golgi apparatus. It is found in the trans-Golgi network membrane. Functionally, inhibits the binding of prostaglandin F2-alpha (PGF2-alpha) to its specific FP receptor, by decreasing the receptor number rather than the affinity constant. Functional coupling with the prostaglandin F2-alpha receptor seems to occur. In myoblasts, associates with tetraspanins CD9 and CD81 to prevent myotube fusion during muscle regeneration. This chain is Prostaglandin F2 receptor negative regulator (Ptgfrn), found in Mus musculus (Mouse).